A 242-amino-acid chain; its full sequence is Ribosomal RNA small subunit methyltransferase G (242 aa).

Residues glycine 78, leucine 83, 130-131, and arginine 151 contribute to the S-adenosyl-L-methionine site; that span reads AE.

This sequence belongs to the methyltransferase superfamily. RNA methyltransferase RsmG family.

Its subcellular location is the cytoplasm. Specifically methylates the N7 position of guanine in position 518 of 16S rRNA. The protein is Ribosomal RNA small subunit methyltransferase G of Salinispora tropica (strain ATCC BAA-916 / DSM 44818 / JCM 13857 / NBRC 105044 / CNB-440).